The chain runs to 291 residues: ATP synthase gamma chain (291 aa).

It belongs to the ATPase gamma chain family. In terms of assembly, F-type ATPases have 2 components, CF(1) - the catalytic core - and CF(0) - the membrane proton channel. CF(1) has five subunits: alpha(3), beta(3), gamma(1), delta(1), epsilon(1). CF(0) has three main subunits: a, b and c.

The protein localises to the cell inner membrane. Functionally, produces ATP from ADP in the presence of a proton gradient across the membrane. The gamma chain is believed to be important in regulating ATPase activity and the flow of protons through the CF(0) complex. The sequence is that of ATP synthase gamma chain from Sinorhizobium medicae (strain WSM419) (Ensifer medicae).